The primary structure comprises 444 residues: Acyl-CoA 6-desaturase (444 aa).

Residues 1–131 (MGKGGNQGEG…DMNLFKTNHV (131 aa)) are Cytoplasmic-facing. The Cytochrome b5 heme-binding domain occupies 18-95 (VPTFSWEEIQ…LKPLLIGELA (78 aa)). The helical transmembrane segment at 132 to 152 (FFLLLLAHIIALESIAWFTVF) threads the bilayer. Over 153–157 (YFGNG) the chain is Lumenal. Residues 158 to 178 (WIPTLITAFVLATSQAQAGWL) traverse the membrane as a helical segment. Topologically, residues 179–264 (QHDYGHLSVY…KYLPYNHQHE (86 aa)) are cytoplasmic. Residues 180–184 (HDYGH) carry the Histidine box-1 motif. The short motif at 217-221 (HFQHH) is the Histidine box-2 element. Residues 265-285 (YFFLIGPPLLIPMYFQYQIIM) form a helical membrane-spanning segment. Topologically, residues 286-305 (TMIVHKNWVDLAWAVSYYIR) are lumenal. The chain crosses the membrane as a helical span at residues 306–326 (FFITYIPFYGILGALLFLNFI). The Cytoplasmic portion of the chain corresponds to 327–444 (RFLESHWFVW…KLWLDAYLHK (118 aa)). The Histidine box-3 signature appears at 382-386 (QIEHH).

The protein belongs to the fatty acid desaturase type 1 family. Expressed in a wide array of tissues, highest expression is found in liver followed by brain, lung, heart, and retina. A lower level is found in breast tumor when compared with normal tissues; lowest levels were found in patients with poor prognostic index.

The protein resides in the endoplasmic reticulum membrane. It carries out the reaction (9Z,12Z)-octadecadienoyl-CoA + 2 Fe(II)-[cytochrome b5] + O2 + 2 H(+) = (6Z,9Z,12Z)-octadecatrienoyl-CoA + 2 Fe(III)-[cytochrome b5] + 2 H2O. It catalyses the reaction (9Z,12Z,15Z)-octadecatrienoyl-CoA + 2 Fe(II)-[cytochrome b5] + O2 + 2 H(+) = (6Z,9Z,12Z,15Z)-octadecatetraenoyl-CoA + 2 Fe(III)-[cytochrome b5] + 2 H2O. The enzyme catalyses hexadecanoyl-CoA + 2 Fe(II)-[cytochrome b5] + O2 + 2 H(+) = (6Z)-hexadecenoyl-CoA + 2 Fe(III)-[cytochrome b5] + 2 H2O. The catalysed reaction is (9Z,12Z,15Z,18Z,21Z)-tetracosapentaenoyl-CoA + 2 Fe(II)-[cytochrome b5] + O2 + 2 H(+) = (6Z,9Z,12Z,15Z,18Z,21Z)-tetracosahexaenoyl-CoA + 2 Fe(III)-[cytochrome b5] + 2 H2O. It carries out the reaction (11E)-octadecenoyl-CoA + 2 Fe(II)-[cytochrome b5] + O2 + 2 H(+) = (6Z,11E)-octadecadienoyl-CoA + 2 Fe(III)-[cytochrome b5] + 2 H2O. It catalyses the reaction (11Z,14Z)-eicosadienoyl-CoA + 2 Fe(II)-[cytochrome b5] + O2 + 2 H(+) = (8Z,11Z,14Z)-eicosatrienoyl-CoA + 2 Fe(III)-[cytochrome b5] + 2 H2O. The enzyme catalyses (11Z,14Z,17Z)-eicosatrienoyl-CoA + 2 Fe(II)-[cytochrome b5] + O2 + 2 H(+) = (8Z,11Z,14Z,17Z)-eicosatetraenoyl-CoA + 2 Fe(III)-[cytochrome b5] + 2 H2O. It functions in the pathway lipid metabolism; polyunsaturated fatty acid biosynthesis. In terms of biological role, involved in the biosynthesis of highly unsaturated fatty acids (HUFA) from the essential polyunsaturated fatty acids (PUFA) linoleic acid (LA) (18:2n-6) and alpha-linolenic acid (ALA) (18:3n-3) precursors, acting as a fatty acyl-coenzyme A (CoA) desaturase that introduces a cis double bond at carbon 6 of the fatty acyl chain. Catalyzes the first and rate limiting step in this pathway which is the desaturation of LA (18:2n-6) and ALA (18:3n-3) into gamma-linoleate (GLA) (18:3n-6) and stearidonate (18:4n-3), respectively. Subsequently, in the biosynthetic pathway of HUFA n-3 series, it desaturates tetracosapentaenoate (24:5n-3) to tetracosahexaenoate (24:6n-3), which is then converted to docosahexaenoate (DHA)(22:6n-3), an important lipid for nervous system function. Desaturates hexadecanate (palmitate) to produce 6Z-hexadecenoate (sapienate), a fatty acid unique to humans and major component of human sebum, that has been implicated in the development of acne and may have potent antibacterial activity. It can also desaturate (11E)-octadecenoate (trans-vaccenoate, the predominant trans fatty acid in human milk) at carbon 6 generating (6Z,11E)-octadecadienoate. In addition to Delta-6 activity, this enzyme exhibits Delta-8 activity with slight biases toward n-3 fatty acyl-CoA substrates. In Homo sapiens (Human), this protein is Acyl-CoA 6-desaturase.